The chain runs to 205 residues: Probable ADP-ribosylation factor At2g15310 (205 aa).

G2 carries the N-myristoyl glycine lipid modification. Residues 24–31 (GLDGSGKT), 67–71 (DIGGQ), and 126–129 (NKQD) contribute to the GTP site.

Belongs to the small GTPase superfamily. Arf family.

The protein localises to the golgi apparatus. GTP-binding protein involved in protein trafficking; may modulate vesicle budding and uncoating within the Golgi apparatus. This chain is Probable ADP-ribosylation factor At2g15310, found in Arabidopsis thaliana (Mouse-ear cress).